The following is a 237-amino-acid chain: NAD(P)H-hydrate epimerase (237 aa).

Positions 11–223 (AASLDRDLMN…GLDIPEYPGV (213 aa)) constitute a YjeF N-terminal domain. Residue 61 to 65 (NNGGD) coordinates (6S)-NADPHX. K(+) contacts are provided by N62 and D123. (6S)-NADPHX-binding positions include 127 to 133 (GFSFSGP) and D156. S159 serves as a coordination point for K(+).

It belongs to the NnrE/AIBP family. K(+) is required as a cofactor.

Its subcellular location is the cytoplasm. The protein localises to the mitochondrion. The catalysed reaction is (6R)-NADHX = (6S)-NADHX. The enzyme catalyses (6R)-NADPHX = (6S)-NADPHX. In terms of biological role, catalyzes the epimerization of the S- and R-forms of NAD(P)HX, a damaged form of NAD(P)H that is a result of enzymatic or heat-dependent hydration. This is a prerequisite for the S-specific NAD(P)H-hydrate dehydratase to allow the repair of both epimers of NAD(P)HX. This chain is NAD(P)H-hydrate epimerase, found in Ajellomyces capsulatus (strain G186AR / H82 / ATCC MYA-2454 / RMSCC 2432) (Darling's disease fungus).